Consider the following 201-residue polypeptide: MAKRVTGPEIEKLIQLLAKVPGLGPRSARRAALHLVKKKEQLLGPLAEAMGEAHRKVKICSCCGNVDTIDPCTVCGDERRDQAVIIVVEDVADLWALERAGAMNAAYHVLGGTLSPLDGIGPEDLNIRALVDRVAKGGVRELIIAVNATVEGQTTAHYITDQLEGMEVRITRLAHGVPVGGELDYLDEGTLAAALRARTAI.

The segment at 60–75 (CSCCGNVDTIDPCTVC) adopts a C4-type zinc-finger fold. The region spanning 83 to 178 (AVIIVVEDVA…RITRLAHGVP (96 aa)) is the Toprim domain.

The protein belongs to the RecR family.

Functionally, may play a role in DNA repair. It seems to be involved in an RecBC-independent recombinational process of DNA repair. It may act with RecF and RecO. The sequence is that of Recombination protein RecR from Sinorhizobium medicae (strain WSM419) (Ensifer medicae).